The primary structure comprises 507 residues: Probable DNA ligase (507 aa).

Glu209 lines the ATP pocket. The active-site N6-AMP-lysine intermediate is the Lys211. Residues Arg216, Arg231, Glu260, Phe300, Arg372, and Lys378 each coordinate ATP.

This sequence belongs to the ATP-dependent DNA ligase family. Requires Mg(2+) as cofactor.

The catalysed reaction is ATP + (deoxyribonucleotide)n-3'-hydroxyl + 5'-phospho-(deoxyribonucleotide)m = (deoxyribonucleotide)n+m + AMP + diphosphate.. DNA ligase that seals nicks in double-stranded DNA during DNA replication, DNA recombination and DNA repair. This is Probable DNA ligase from Mycobacterium bovis (strain ATCC BAA-935 / AF2122/97).